The primary structure comprises 597 residues: Probable serine/threonine-protein kinase DDB_G0281745 (597 aa).

Over residues 49 to 61 (TIDNSNGKQSTTP) the composition is skewed to polar residues. The interval 49 to 320 (TIDNSNGKQS…RNNESTATTA (272 aa)) is disordered. A compositionally biased stretch (pro residues) spans 72–97 (QPPPQQSQQQPPQPLKPIPATRPVPT). The span at 114-140 (TLPTTNSSTKYSTLPSRQFFEVSSSPG) shows a compositional bias: polar residues. A compositionally biased stretch (low complexity) spans 157-168 (SLSSNQNGSNLN). The span at 208–234 (PSPPSPPLQSPQPTPQQQPPPLKPIPQ) shows a compositional bias: pro residues. Residues 235-264 (PQQQQQQQQQQQQQQQQQQQQQQQQQQQQQ) are compositionally biased toward low complexity. Positions 265 to 274 (QPPPLKPIPQ) are enriched in pro residues. Low complexity predominate over residues 275–301 (PQQSQPTQPIKSQIQIPITNTNGNTNG). A Protein kinase domain is found at 334-585 (KFVGNEIGSG…KVLDTIQNIY (252 aa)). ATP-binding positions include 340 to 348 (IGSGKYGSV) and K361. Residue D454 is the Proton acceptor of the active site.

Belongs to the protein kinase superfamily. TKL Ser/Thr protein kinase family.

The catalysed reaction is L-seryl-[protein] + ATP = O-phospho-L-seryl-[protein] + ADP + H(+). It carries out the reaction L-threonyl-[protein] + ATP = O-phospho-L-threonyl-[protein] + ADP + H(+). The sequence is that of Probable serine/threonine-protein kinase DDB_G0281745 from Dictyostelium discoideum (Social amoeba).